The sequence spans 230 residues: Broad specificity amino-acid racemase YgeA (230 aa).

Substrate-binding positions include M10, Q52, and T83–T85. T83 acts as the Proton donor in catalysis. The active-site Proton acceptor is C197. Residue T198–E199 coordinates substrate.

This sequence belongs to the aspartate/glutamate racemases family.

It catalyses the reaction an L-alpha-amino acid = a D-alpha-amino acid. The enzyme catalyses L-homoserine = D-homoserine. Its function is as follows. Amino-acid racemase able to utilize a broad range of substrates. Highest activity is observed with L-homoserine and D-homoserine. Has tenfold lower activity against L-methionine, L-leucine, L-valine and L-histidine. Has low activity with L-norvaline, L-asparagine, D-methionine, L-aminobutyric acid, L-isoleucine, L-serine, L-norleucine, L-alanine, L-glutamine, LL-diaminopimelic acid and L-phenylalanine. Has no activity against ten L-amino acids (Thr, Glu, Asp, Arg, Lys, Tyr, Trp, Orn, Cit and Aad). D-amino acids might be used as components of peptidoglycan and/or be involved in peptidoglycan metabolism and remodeling. This Escherichia coli (strain K12) protein is Broad specificity amino-acid racemase YgeA (ygeA).